Consider the following 572-residue polypeptide: Hemolysin-1 (572 aa).

Bacterial hemolysins are exotoxins that attack blood cell membranes and cause cell rupture by mechanisms not clearly defined. The sequence is that of Hemolysin-1 (ash1) from Aeromonas salmonicida.